An 823-amino-acid chain; its full sequence is Tax1-binding protein 1 homolog B (823 aa).

Residues valine 149 to glutamine 487 adopt a coiled-coil conformation. 2 disordered regions span residues histidine 342–asparagine 377 and glutamate 486–aspartate 519. A compositionally biased stretch (basic and acidic residues) spans lysine 356–glutamine 368. The segment covering alanine 498–serine 518 has biased composition (low complexity). A coiled-coil region spans residues glutamine 548–asparagine 638. A disordered region spans residues methionine 650–phenylalanine 746. A compositionally biased stretch (acidic residues) spans leucine 723–alanine 739. UBZ1-type zinc fingers lie at residues glutamine 762–histidine 788 and tryptophan 789–histidine 815. Residues cysteine 765, cysteine 768, histidine 784, histidine 788, cysteine 792, cysteine 795, histidine 811, and histidine 815 each contribute to the Zn(2+) site.

Expressed at relatively high levels in both proximal and distal regions of the fin bud during pectoral fin development.

Its function is as follows. May have anti-apoptotic activity. The sequence is that of Tax1-binding protein 1 homolog B (tax1bp1b) from Danio rerio (Zebrafish).